The sequence spans 224 residues: UPF0758 protein HEAR2468 (224 aa).

In terms of domain architecture, MPN spans 102–224 (ALNSPQAVKQ…VYSFAEQGQL (123 aa)). Residues His-173, His-175, and Asp-186 each contribute to the Zn(2+) site. The JAMM motif motif lies at 173–186 (HNHPSGTPEPSAAD).

It belongs to the UPF0758 family.

The protein is UPF0758 protein HEAR2468 of Herminiimonas arsenicoxydans.